Consider the following 621-residue polypeptide: MFDFKAQLKILPNEPGVYLMKNSLGEIIYVGKAKILKNRVRQYFQNSKNHSEKVKAMVKNVAEFEYIVTDSEMEALILECNLIKKYSPKYNISLKDDKFYPFIKVTTNEDFPRVFITRNYAKDGNKYFGPYPNAGDVHETINLIRKIFPLRTCKKSIIEGEKPTRACLNYHIKKCNAPCEGRISKTEYKKMIDEIMEVLSGKDRSLLNKLKEEMQSASGNLEFEKAASLRDKMIAIENIAEKQKVFKSQENDEDFINIYKDEKDCCIQVFFLRDGKITGREHFMIENSSHEEDTTIISQFIISFYGGTPKVPKNIYIPESDEIEALEEFLSIKRGSRVFVKVPIKGEKKEMLELVKNNAKVTLDQFKDKILRDKEINMISLKEIQELLELDSIPLRIEAYDISNIQGVDSVGSMIVFENGKAKNSDYRRFRIKTVKSANDYDSMREILDRRFTHGLKEIEEIQNKEIKFSSGKFSNFPDLIMMDGGKGQVNIALEVLEKLGIDIPVCGLVKDDYHATRGIIYNNNELIINRNSNLMQMIRRIQDEVHRFAITYHRSLRDKRTLHSILDDIPNIGQKRRMSLLMKFGSIDNIKKATLDELLETESIDTKAANSVLEYFRNTK.

A GIY-YIG domain is found at 13 to 92; that stretch reads NEPGVYLMKN…IKKYSPKYNI (80 aa). Positions 204–239 constitute a UVR domain; that stretch reads RSLLNKLKEEMQSASGNLEFEKAASLRDKMIAIENI.

The protein belongs to the UvrC family. In terms of assembly, interacts with UvrB in an incision complex.

It is found in the cytoplasm. The UvrABC repair system catalyzes the recognition and processing of DNA lesions. UvrC both incises the 5' and 3' sides of the lesion. The N-terminal half is responsible for the 3' incision and the C-terminal half is responsible for the 5' incision. This chain is UvrABC system protein C, found in Clostridium beijerinckii (strain ATCC 51743 / NCIMB 8052) (Clostridium acetobutylicum).